A 92-amino-acid chain; its full sequence is Protein S100-B (92 aa).

S2 is modified (N-acetylserine). 2 consecutive EF-hand domains span residues D13–I48 and K49–A84. H16 is a Zn(2+) binding site. The Ca(2+) site is built by S19, E22, and D24. Residue H26 coordinates Zn(2+). Ca(2+) is bound by residues D62, D64, D66, E68, and E73. The Zn(2+) site is built by H86 and H91.

It belongs to the S-100 family. In terms of assembly, dimer of either two alpha chains, or two beta chains, or one alpha and one beta chain. The S100B dimer binds two molecules of STK38. Interacts with CACYBP in a calcium-dependent manner. Interacts with ATAD3A; this interaction probably occurs in the cytosol prior to ATAD3A mitochondrial targeting. Interacts with S100A6. The S100B dimer interacts with two molecules of CAPZA1. Interacts with AGER. Interacts with PPP5C (via TPR repeats); the interaction is calcium-dependent and modulates PPP5C activity. Interacts with TPPP; this interaction inhibits TPPP dimerization. Interacts with isoform CLSTN3beta of CLSTN3; interaction promotes secretion.

Its subcellular location is the cytoplasm. The protein localises to the nucleus. The protein resides in the secreted. In terms of biological role, small zinc- and- and calcium-binding protein that is highly expressed in astrocytes and constitutes one of the most abundant soluble proteins in brain. Weakly binds calcium but binds zinc very tightly-distinct binding sites with different affinities exist for both ions on each monomer. Physiological concentrations of potassium ion antagonize the binding of both divalent cations, especially affecting high-affinity calcium-binding sites. Acts as a neurotrophic factor that promotes astrocytosis and axonal proliferation. Involved in innervation of thermogenic adipose tissue by acting as an adipocyte-derived neurotrophic factor that promotes sympathetic innervation of adipose tissue. Binds to and initiates the activation of STK38 by releasing autoinhibitory intramolecular interactions within the kinase. Interaction with AGER after myocardial infarction may play a role in myocyte apoptosis by activating ERK1/2 and p53/TP53 signaling. Could assist ATAD3A cytoplasmic processing, preventing aggregation and favoring mitochondrial localization. May mediate calcium-dependent regulation on many physiological processes by interacting with other proteins, such as TPR-containing proteins, and modulating their activity. This chain is Protein S100-B (S100B), found in Bos taurus (Bovine).